A 271-amino-acid chain; its full sequence is 3-methyl-2-oxobutanoate hydroxymethyltransferase (271 aa).

Aspartate 44 and aspartate 83 together coordinate Mg(2+). Residues 44 to 45 (DS), aspartate 83, and lysine 112 each bind 3-methyl-2-oxobutanoate. Glutamate 114 provides a ligand contact to Mg(2+). Residue glutamate 181 is the Proton acceptor of the active site.

The protein belongs to the PanB family. Homodecamer; pentamer of dimers. It depends on Mg(2+) as a cofactor.

It localises to the cytoplasm. It carries out the reaction 3-methyl-2-oxobutanoate + (6R)-5,10-methylene-5,6,7,8-tetrahydrofolate + H2O = 2-dehydropantoate + (6S)-5,6,7,8-tetrahydrofolate. Its pathway is cofactor biosynthesis; coenzyme A biosynthesis. Catalyzes the reversible reaction in which hydroxymethyl group from 5,10-methylenetetrahydrofolate is transferred onto alpha-ketoisovalerate to form ketopantoate. This is 3-methyl-2-oxobutanoate hydroxymethyltransferase from Staphylothermus marinus (strain ATCC 43588 / DSM 3639 / JCM 9404 / F1).